We begin with the raw amino-acid sequence, 274 residues long: RsbT co-antagonist protein RsbRA (274 aa).

One can recognise an STAS domain in the interval 150-265 (SAPLIPVFEN…KGIQTALEMT (116 aa)). Phosphothreonine occurs at positions 171 and 205.

In terms of assembly, interacts with RsbRB and RsbS in the stressosome. The stressosome probably also contains RsbRC and RsbRD. In terms of processing, phosphorylated by RsbT. This threonine phosphorylation abrogates the ability of RsbRA to stimulate RsbT in vitro.

Acts as a positive regulator of sigma-B activity in response to salt and heat stress by stimulating the activity of the RsbT kinase toward RsbS in vitro. Functionally, one of 4 functionally non-identical RsbR paralogs, it functions in the environmental signaling branch of the general stress response. In terms of biological role, negative regulator of sigma-B activity. Non-phosphorylated RsbS binds to RsbT, preventing its association with RsbU. Requires any one of RsbRA, RsbRB, RsbRC or RsbRD to sequester RsbT. When RsbS and the RsbR paralog(s) are phosphorylated, they release RsbT, which can then bind and activate RsbU. This Bacillus subtilis (strain 168) protein is RsbT co-antagonist protein RsbRA (rsbRA).